Reading from the N-terminus, the 214-residue chain is Orotate phosphoribosyltransferase (214 aa).

5-phospho-alpha-D-ribose 1-diphosphate is bound by residues Arg125, Lys126, Lys129, His131, and 151 to 159; that span reads EDTSTTGNS. Thr155 and Arg183 together coordinate orotate.

It belongs to the purine/pyrimidine phosphoribosyltransferase family. PyrE subfamily. As to quaternary structure, homodimer. Mg(2+) is required as a cofactor.

It carries out the reaction orotidine 5'-phosphate + diphosphate = orotate + 5-phospho-alpha-D-ribose 1-diphosphate. The protein operates within pyrimidine metabolism; UMP biosynthesis via de novo pathway; UMP from orotate: step 1/2. Catalyzes the transfer of a ribosyl phosphate group from 5-phosphoribose 1-diphosphate to orotate, leading to the formation of orotidine monophosphate (OMP). This is Orotate phosphoribosyltransferase from Tropheryma whipplei (strain TW08/27) (Whipple's bacillus).